Here is a 718-residue protein sequence, read N- to C-terminus: Nucleolar protein 11 (718 aa).

K346 is modified (N6-methyllysine).

In terms of assembly, interacts with UTP4. Interacts with FBL/fibrillarin in a transcription-dependent manner. May associate with the proposed t-UTP subcomplex of the SSU processome containing at least UTP4, WDR43, HEATR1, UTP15, WDR75.

It localises to the nucleus. Its subcellular location is the nucleolus. Its function is as follows. Ribosome biogenesis factor. May be required for both optimal rDNA transcription and small subunit (SSU) pre-rRNA processing at sites A', A0, 1 and 2b. The chain is Nucleolar protein 11 (NOL11) from Pongo abelii (Sumatran orangutan).